A 286-amino-acid polypeptide reads, in one-letter code: UDP-3-O-acyl-N-acetylglucosamine deacetylase (286 aa).

Residues H79, H237, and D241 each contribute to the Zn(2+) site. Residue H264 is the Proton donor of the active site.

The protein belongs to the LpxC family. It depends on Zn(2+) as a cofactor.

The catalysed reaction is a UDP-3-O-[(3R)-3-hydroxyacyl]-N-acetyl-alpha-D-glucosamine + H2O = a UDP-3-O-[(3R)-3-hydroxyacyl]-alpha-D-glucosamine + acetate. Its pathway is glycolipid biosynthesis; lipid IV(A) biosynthesis; lipid IV(A) from (3R)-3-hydroxytetradecanoyl-[acyl-carrier-protein] and UDP-N-acetyl-alpha-D-glucosamine: step 2/6. In terms of biological role, catalyzes the hydrolysis of UDP-3-O-myristoyl-N-acetylglucosamine to form UDP-3-O-myristoylglucosamine and acetate, the committed step in lipid A biosynthesis. The polypeptide is UDP-3-O-acyl-N-acetylglucosamine deacetylase (Chlamydia trachomatis serovar A (strain ATCC VR-571B / DSM 19440 / HAR-13)).